We begin with the raw amino-acid sequence, 163 residues long: Ribosome maturation factor RimM (163 aa).

A PRC barrel domain is found at 94-162 (ADEYYYIDLI…DHLVIAADFI (69 aa)).

The protein belongs to the RimM family. In terms of assembly, binds ribosomal protein uS19.

It is found in the cytoplasm. An accessory protein needed during the final step in the assembly of 30S ribosomal subunit, possibly for assembly of the head region. Essential for efficient processing of 16S rRNA. May be needed both before and after RbfA during the maturation of 16S rRNA. It has affinity for free ribosomal 30S subunits but not for 70S ribosomes. This Zymomonas mobilis subsp. mobilis (strain ATCC 31821 / ZM4 / CP4) protein is Ribosome maturation factor RimM.